The sequence spans 332 residues: uncharacterized protein (332 aa).

A signal peptide spans 1 to 26 (MSSLGKLLKLTLLGILLSFSCKFVFG).

The protein localises to the endoplasmic reticulum. This is an uncharacterized protein from Schizosaccharomyces pombe (strain 972 / ATCC 24843) (Fission yeast).